Here is a 2197-residue protein sequence, read N- to C-terminus: Activating signal cointegrator 1 complex subunit 3 (2197 aa).

S12 carries the post-translational modification Phosphoserine. Coiled-coil stretches lie at residues 18-80 (KQDN…AKQI) and 328-356 (IQSE…KAGE). Residues 487–670 (DTAYNTNENM…FLHVNPYIGL (184 aa)) enclose the Helicase ATP-binding 1 domain. Position 500–507 (500–507 (APTGAGKT)) interacts with ATP. K573 carries the N6-acetyllysine modification. The DEVH box signature appears at 612-615 (DEVH). In terms of domain architecture, Helicase C-terminal 1 spans 697-915 (QLNNMDEVCY…GTVTNVEEAV (219 aa)). Positions 979-1288 (STDLGRTASH…GAEAVCIINF (310 aa)) constitute an SEC63 1 domain. Positions 1337-1512 (HTLYHTDCNV…WLNIKQMGLF (176 aa)) constitute a Helicase ATP-binding 2 domain. 1350–1357 (APTGSGKT) serves as a coordination point for ATP. The DEIH box signature appears at 1454 to 1457 (DEIH). Residues 1565 to 1739 (RMLSSMTKLE…VLSDHLNAEI (175 aa)) form the Helicase C-terminal 2 domain. An SEC63 2 domain is found at 1812 to 2175 (PLTCGRIASY…YLGLDQQYDI (364 aa)).

This sequence belongs to the helicase family. As to quaternary structure, identified in the ASCC complex that contains ASCC1, ASCC2 and ASCC3. Functions as a scaffolding subunit that interacts directly with both ASCC1 and ASCC2. Interacts directly with ALKBH3, and thereby recruits ALKBH3 to the ASCC complex. Part of the ASC-1/TRIP4 complex, that contains TRIP4, ASCC1, ASCC2 and ASCC3. Part of the RQT (ribosome quality control trigger) complex, that contains ASCC2, ASCC3 and TRIP4. Associates with ribosomes; recruited to collided ribosomes. Interacts with ZCCHC4. Interacts with ZNF598. Interacts with RPS3.

It is found in the nucleus. The protein resides in the nucleus speckle. It localises to the cytoplasm. Its subcellular location is the cytosol. It carries out the reaction Couples ATP hydrolysis with the unwinding of duplex DNA by translocating in the 3'-5' direction.. The catalysed reaction is ATP + H2O = ADP + phosphate + H(+). ATPase involved both in DNA repair and rescue of stalled ribosomes. 3'-5' DNA helicase involved in repair of alkylated DNA: promotes DNA unwinding to generate single-stranded substrate needed for ALKBH3, enabling ALKBH3 to process alkylated N3-methylcytosine (3mC) within double-stranded regions. Also involved in activation of the ribosome quality control (RQC) pathway, a pathway that degrades nascent peptide chains during problematic translation. Drives the splitting of stalled ribosomes that are ubiquitinated in a ZNF598-dependent manner, as part of the ribosome quality control trigger (RQT) complex. Part of the ASC-1 complex that enhances NF-kappa-B, SRF and AP1 transactivation. This is Activating signal cointegrator 1 complex subunit 3 (Ascc3) from Rattus norvegicus (Rat).